A 708-amino-acid polypeptide reads, in one-letter code: MATLYEEYTLCGVGPDKNSSSSGILGIELGKDVDHIIVTNSSRAVTVYKVSDQKPTGSWTVKQGQLITCPAVYNTKSQEYVVVTDNKVIRVWKEDDVNMEKAFKATVSSDVLRVIAASDSEPVVLFSCGAVMFLDSLLASPQQTIEGVLTEEEFIRWSTVVGAEHQLVLLFCTEKRGEHYLYAQRFNPNTVVKHRFETEPGPFAPISFSATCRGSNIHLQYLYMSGRIYESVLPLRSSVSEAEGVQALPRSLCLSLPLGEQELTSGAAIVLDEAHVAIVGFPHPSAGAGKDYLCIWNKHFQTLQACKELAGTIYSQIWCYSGKLYIPHGKILSVISFECQKSSLAAAMGKLKQTNQSESKSHTPLSSWTALPHNDSINAAKVKSRMSTRNASNVKSPLTVDQLIDHIKTAVVEDVQSAVGEFIHQTPQTDLQLAAGKVTMVLVSRSQTDDSFYPQRAFLQLLDTRYLCYSVCPELLSLAMAKRDFQLCQIAFQLFPDIPEAVTCAYLKTILSTPDSEMETLTLDTESLIIMKEMSPAQSQMEEGEQQNENGVSSSKQQRDFLSMDMKCPVGLHKGVLLNDVLQTAYSDKPLLQHLKDLTVLQVMVFLQYLHFLYLKYSQDVHKQIRALRIPSISQVIDWASLILDAHFTVLAVAPEAKSLVSDLHKFTRSQVKLYAELGKIEGSLQSLKKPKSTEHTGVYSIEVIELF.

The protein localises to the nucleus. It localises to the nucleolus. Its function is as follows. Ribosome biogenesis factor. May be required for both optimal rDNA transcription and pre-rRNA processing. This chain is Nucleolar protein 11-like (nol11), found in Danio rerio (Zebrafish).